Here is a 105-residue protein sequence, read N- to C-terminus: uncharacterized protein (105 aa).

Residues 1 to 27 (MSLKSWHPQSKTKRVGASEGNPQWGSG) form a disordered region.

This is an uncharacterized protein from Homo sapiens (Human).